A 292-amino-acid chain; its full sequence is MSDAAKSNNNASADAPDPTTPDATGEADAANAATPTTPRGNHNNNNSANGRSKNKLKSTQNSSGGGSIDKLSPDQDIFINAADGLPNQHPSLPKEGDVDSDTEPEVDADSFDDLPTSIIVTNIHSEVFANPELKHAMEELFRTFSESATFQWLRSFRRLRVNYDNAIAAANARIKLHQYEFNKKTVITCYFAQPVTPVSNKNLQPPAPVKQFLISPPASPPAGWEPREEGEPLVNHDLLAALASLTPGESHELHPQSEDQPAIIVHTAMLAETGPGLQVKAPIVQTKCPERA.

Residues 1 to 51 (MSDAAKSNNNASADAPDPTTPDATGEADAANAATPTTPRGNHNNNNSANGR) show a composition bias toward low complexity. The tract at residues 1–111 (MSDAAKSNNN…TEPEVDADSF (111 aa)) is disordered. Phosphoserine is present on residues serine 67, serine 72, and serine 100. Acidic residues predominate over residues 98–111 (VDSDTEPEVDADSF). Residues threonine 102 and threonine 196 each carry the phosphothreonine modification. Phosphoserine is present on residues serine 215 and serine 219. Threonine 246 bears the Phosphothreonine mark.

This sequence belongs to the RCAN family. As to quaternary structure, interacts with Pp2B-14D, CanA-14F and CanB2. In terms of processing, phosphorylation at Ser-215 and Ser-219 is essential for calcineurin activation and completion of female meiosis. Sgg is required for phosphorylation of Ser-215 in activated eggs. Ser-100, Thr-102 and Ser-219 are highly phosphorylated in both ovaries and activated eggs; however, phosphorylation at Ser-100 or Thr-102 is not required for sra function in completion of female meiosis. Expressed in central nervous system of the third instar larvae, with a relatively intense signal in the brain and weak signals in the ventral ganglion. Relatively low, but ubiquitous expression level is observed in leg and wing imaginal disks, no signal is detected in the eye-antennal disks. Expressed in all neurons in the adult brain.

Required for elongation of meiosis I spindle. Critical for ovulation, meiotic progression in oocytes and female courtship behavior, including their postmating changes. Regulates female meiosis by controlling calcineurin activity in the germline. Has a role in calcium signaling during egg activation; bcd mRNA polyadenylation and translation in the oocyte. The protein is Protein sarah (sra) of Drosophila melanogaster (Fruit fly).